We begin with the raw amino-acid sequence, 364 residues long: Aminomethyltransferase (364 aa).

The protein belongs to the GcvT family. The glycine cleavage system is composed of four proteins: P, T, L and H.

It carries out the reaction N(6)-[(R)-S(8)-aminomethyldihydrolipoyl]-L-lysyl-[protein] + (6S)-5,6,7,8-tetrahydrofolate = N(6)-[(R)-dihydrolipoyl]-L-lysyl-[protein] + (6R)-5,10-methylene-5,6,7,8-tetrahydrofolate + NH4(+). In terms of biological role, the glycine cleavage system catalyzes the degradation of glycine. The protein is Aminomethyltransferase of Shewanella loihica (strain ATCC BAA-1088 / PV-4).